Reading from the N-terminus, the 408-residue chain is MDGLPGRALGAACLLMLAVGSLGPGVWGSPTPPPLPAAPQPPPPPPGAPGGSQDTCTSCGGFRRPEELGRVDGDFLEAVKRHILNRLQMRGRPNITHAVPKAAMVTALRKLHAGKVREDGRVEIPHLDGHASPGADGQERVSEIISFAETDGLASSRVRLYFFISNEGNQNLFVVQASLWLYLKLLPYVLEKGGRRKVRVKVYGQEQGPGDRWAAVEKRVDLKRSGWHTFPLTEPIQALFSRGERRLSLDVQCDSCRELAVVPVFVDPGEESHRPFVVVQARLGDSRHRIRKRGLECDGRTNLCCRQQFFIDFRLIGWNDWIIAPTGYYGNYCEGSCPAYLAGVPGSASSFHTAVVNQYRMRGLNPGTVNSCCIPTKLSTMSMLYFDDEYNIVKRDVPNMIVEECGCA.

Residues 1 to 28 (MDGLPGRALGAACLLMLAVGSLGPGVWG) form the signal peptide. Residues 29-60 (SPTPPPLPAAPQPPPPPPGAPGGSQDTCTSCG) form a disordered region. Residues 29-293 (SPTPPPLPAA…GDSRHRIRKR (265 aa)) constitute a propeptide that is removed on maturation. Residues 30-48 (PTPPPLPAAPQPPPPPPGA) show a composition bias toward pro residues. An N-linked (GlcNAc...) asparagine glycan is attached at N94. 4 disulfide bridges follow: C297–C305, C304–C373, C333–C405, and C337–C407.

The protein belongs to the TGF-beta family. As to quaternary structure, dimeric, linked by one or more disulfide bonds. Inhibin B is a dimer of alpha and beta-B. Activin B is a homodimer of beta-B. Activin AB is a dimer of beta-A and beta-B. Interacts with FST and FSTL3.

Its subcellular location is the secreted. Functionally, inhibins and activins inhibit and activate, respectively, the secretion of follitropin by the pituitary gland. Inhibins/activins are involved in regulating a number of diverse functions such as hypothalamic and pituitary hormone secretion, gonadal hormone secretion, germ cell development and maturation, erythroid differentiation, insulin secretion, nerve cell survival, embryonic axial development or bone growth, depending on their subunit composition. Inhibins appear to oppose the functions of activins. In terms of biological role, activin B is a dimer of alpha and beta-B that plays a role in several essential biological processes including embryonic development, stem cell maintenance and differentiation, haematopoiesis, cell proliferation and wound healing. Signals through type I receptor ACVR1C, abundantly expressed in pancreatic beta cells, and type II receptors like ACVR2A. Upon ligand binding, these receptors phosphorylate intracellular signaling mediators SMAD2 and SMAD3, which form a complex with SMAD4, translocate to the nucleus, and regulate gene expression. Plays a crucial role in the induction of hepcidin by inflammation through activation of ACVR1C and subsequent phosphorylation of SMAD1/5/8. Regulates adipocyte lipid metabolism by decreasing non-esterified fatty acids and glycerol release and increases intracellular triglyceride content. Stimulates wound healing by promoting cell migration and hair follicle regeneration through the JNK and ERK signaling pathways downstream of RHOA. Inhibin B is a dimer of alpha and beta-B that plays a crucial role in the regulation of the reproductive system by inhibiting the secretion of follicle-stimulating hormone (FSH) from the anterior pituitary gland. Thereby, maintains reproductive homeostasis in both males and females. Acts as a more potent suppressor of FSH release than inhibin A. Functions as competitive receptor antagonist binding activin type II receptors with high affinity in the presence of the TGF-beta type III coreceptor/TGFBR3L. The protein is Inhibin beta B chain (INHBB) of Bos taurus (Bovine).